A 784-amino-acid chain; its full sequence is DNA repair and recombination protein RAD54-like (784 aa).

Residues 1–50 (MRRSLAPSQRGPLRPESRHSFTPPLLKKNKRSCQQELEREQELDRKRQSA) form a disordered region. The tract at residues 2–9 (RRSLAPSQ) is required for chromatin remodeling, strand pairing activities and coupling of ATPase activity. Serine 20 carries the post-translational modification Phosphoserine. Threonine 22 carries the post-translational modification Phosphothreonine. Residues 36 to 47 (ELEREQELDRKR) show a composition bias toward basic and acidic residues. A Helicase ATP-binding domain is found at 172 to 346 (EGKRGNFNGC…YSLVNFVNPE (175 aa)). 185 to 192 (DEMGLGKT) contributes to the ATP binding site. Residues 297 to 300 (DEGH) carry the DEGH box motif. A Helicase C-terminal domain is found at 503-660 (LLDFMLAAIR…NNESAEKHFT (158 aa)). Positions 747–756 (VASAEEAASE) are enriched in low complexity. Positions 747–784 (VASAEEAASEQPEEKPDRRKRPSTPLSDDSADEDFLGF) are disordered. Residues 775–784 (DSADEDFLGF) are compositionally biased toward acidic residues.

It belongs to the SNF2/RAD54 helicase family. In terms of assembly, interacts (via N-terminus) with spn-A/Rad51.

Its subcellular location is the nucleus. Functionally, involved in mitotic DNA repair and meiotic recombination. Functions in the recombinational DNA repair pathway. Essential for interhomolog gene conversion (GC), but may have a less important role in intersister GC than spn-A/Rad51. In the presence of DNA, spn-A/Rad51 enhances the ATPase activity of okr/Rad54. In Drosophila erecta (Fruit fly), this protein is DNA repair and recombination protein RAD54-like.